The chain runs to 163 residues: Lipoprotein signal peptidase (163 aa).

Transmembrane regions (helical) follow at residues 11–31 (ILIA…IATT), 63–83 (KMTF…YFFI), and 88–108 (YNLF…GNFI). Catalysis depends on residues Asp118 and Asp136. The helical transmembrane segment at 131-151 (IFNIADSSLTIGVILIIIALL) threads the bilayer.

The protein belongs to the peptidase A8 family.

The protein resides in the cell membrane. It catalyses the reaction Release of signal peptides from bacterial membrane prolipoproteins. Hydrolyzes -Xaa-Yaa-Zaa-|-(S,diacylglyceryl)Cys-, in which Xaa is hydrophobic (preferably Leu), and Yaa (Ala or Ser) and Zaa (Gly or Ala) have small, neutral side chains.. The protein operates within protein modification; lipoprotein biosynthesis (signal peptide cleavage). In terms of biological role, this protein specifically catalyzes the removal of signal peptides from prolipoproteins. In Staphylococcus aureus, this protein is Lipoprotein signal peptidase.